The following is a 74-amino-acid chain: uncharacterized protein (74 aa).

The helical transmembrane segment at 52 to 72 (ITFGFTVLGLGIGMIFGDAGL) threads the bilayer.

It localises to the membrane. This is an uncharacterized protein from Methanocaldococcus jannaschii (strain ATCC 43067 / DSM 2661 / JAL-1 / JCM 10045 / NBRC 100440) (Methanococcus jannaschii).